Here is a 965-residue protein sequence, read N- to C-terminus: SVPGPMGPSGPRGLPGPPGPGPQGFQGPPGEPGEPGSGPMGPRGPPGPPGKNGDDGEAGKPGRPGERGPPGPQGARGLPGTAGLPGMKGHRGFSGLDGAKGDAGPAGPKGEPGSPGENGAPGQMGPRGLPGERGRPGASGPAGARGNDGATGAAGPPGPTGPAGPPGFPGAVGAKGEAGPQGARGSEGPQGVRGEPGPPGPAGAAGPAGNPGADGQPGAKGANGAPGIAGAPGFPGARGPSGPQGPSGPPGPKGNSGEPGAPGKGDTGAKGEPGPTGIQGPPGPAGEEGKRGARGEPGPTGLPGPPGERGGPGSRGFPGADGAGPKGPAGERGSPGPAGPKGSPGEAGRPGEAGLPGAKGLTGSPGSPGPDGKTGPPGPAGQDGRPGPPGPPGARGQAGVMGFPGPKGAAGEPGKAGERGVPGPPGAVGPAGKDGEAGAQGPPGPAGPAGERGEQGPAGPGFQGLPGPAGPPGEADLGAPGPSGARGERGFPGERGVQGPPGPAGPRGPGLQGMPGERGAAGLPGPKGDRGDAGPKGADGAPGKDGVRGLTGPIGPPGPAGAPGDKGESGPSGPAGPTGARGAPGDRGEPGPPGPAGFAGPPGADGQPGAKGEPGDAGAKGDAGPPGPAGPTGPPGPIGNVGAPGPKGARGSAGPPGATGFPGAAGRVGPPGPSGNAGPPGPPGPVGKEGGKGPRGETGPAGRPGEVGPPGPPGPGEKGSPGADGPAGAPGTPGPQGISGQRGVVGLPGQRGERGFPGLPGPSGEPGKGPPGPMGPPGLAGPPGEGREGSPGAEGSPGRDGSPGPKGDRGETGPSGPPGAPGAPGAPGPVGPAGKSGDRGETGPAGPAGPAGPAGARGPAGPQGPRGDKGETGEQGDRGIKGHRGFSGLQGPAGPPGSPGEQGPSGASGPAGPRGPPGSAGSPGKDGLNGLPGPIGPPGPRGRTGDAGPVGPPGPPGPPGPPGPP.

Residues 1–21 are compositionally biased toward pro residues; sequence SVPGPMGPSGPRGLPGPPGPG. The segment at 1–965 is disordered; that stretch reads SVPGPMGPSG…PGPPGPPGPP (965 aa). Residues proline 15, proline 18, proline 20, proline 29, proline 32, proline 35, proline 49, proline 64, proline 70, proline 79, and proline 85 each carry the 4-hydroxyproline modification. Over residues 52-66 the composition is skewed to basic and acidic residues; sequence NGDDGEAGKPGRPGE. A 5-hydroxylysine; alternate modification is found at lysine 88. The O-linked (Gal...) hydroxylysine; alternate glycan is linked to lysine 88. The residue at position 94 (serine 94) is a Phosphoserine. The segment covering 102–118 has biased composition (low complexity); sequence DAGPAGPKGEPGSPGEN. 4-hydroxyproline occurs at positions 112, 115, 121, 130, 136, 157, 166, 169, 196, 199, 211, 217, 226, 232, 235, and 250. Over residues 136-154 the composition is skewed to low complexity; it reads PGASGPAGARGNDGATGAA. Over residues 156–168 the composition is skewed to pro residues; sequence PPGPTGPAGPPGF. The span at 202–241 shows a compositional bias: low complexity; sequence AGAAGPAGNPGADGQPGAKGANGAPGIAGAPGFPGARGPS. Lysine 253 is subject to 5-hydroxylysine. 8 positions are modified to 4-hydroxyproline: proline 259, proline 262, proline 273, proline 282, proline 297, proline 303, proline 312, and proline 318. The segment covering 307–327 has biased composition (gly residues); it reads GERGGPGSRGFPGADGAGPKG. Lysine 326 carries the post-translational modification 5-hydroxylysine. 23 positions are modified to 4-hydroxyproline: proline 335, proline 344, proline 350, proline 356, proline 365, proline 368, proline 377, proline 386, proline 392, proline 404, proline 413, proline 422, proline 425, proline 443, proline 460, proline 466, proline 472, proline 480, proline 492, proline 501, proline 509, proline 515, and proline 524. The segment covering 359-385 has biased composition (low complexity); that stretch reads KGLTGSPGSPGPDGKTGPPGPAGQDGR. Low complexity predominate over residues 394-413; sequence ARGQAGVMGFPGPKGAAGEP. Positions 472 to 482 are enriched in low complexity; sequence PGEADLGAPGP. 5-hydroxylysine is present on lysine 536. 4-hydroxyproline is present on residues proline 542, proline 557, and proline 563. A compositionally biased stretch (low complexity) spans 569–583; sequence SGPSGPAGPTGARGA. Phosphoserine is present on serine 572. 4-hydroxyproline is present on residues proline 584, proline 590, proline 593, proline 602, proline 608, proline 626, proline 635, and proline 644. A compositionally biased stretch (low complexity) spans 596 to 623; the sequence is AGFAGPPGADGQPGAKGEPGDAGAKGDA. Positions 625–637 are enriched in pro residues; sequence PPGPAGPTGPPGP. Lysine 647 is subject to 5-hydroxylysine. Residues 652–668 are compositionally biased toward low complexity; the sequence is SAGPPGATGFPGAAGRV. Residues proline 656 and proline 662 each carry the 4-hydroxyproline modification. Proline 670 bears the 3-hydroxyproline mark. A 4-hydroxyproline mark is found at proline 671, proline 680, proline 683, proline 704, proline 713, proline 721, proline 730, proline 748, proline 757, proline 760, proline 766, proline 771, proline 777, proline 783, proline 791, and proline 797. Residues 697–706 show a composition bias toward low complexity; the sequence is ETGPAGRPGE. Residues 718–730 show a composition bias toward low complexity; sequence KGSPGADGPAGAP. Residues 768–780 are compositionally biased toward pro residues; it reads KGPPGPMGPPGLA. 5-hydroxylysine is present on lysine 806. Pro residues predominate over residues 815–830; sequence SGPPGAPGAPGAPGPV. A 4-hydroxyproline mark is found at proline 818, proline 821, and proline 824. The segment covering 851–865 has biased composition (low complexity); it reads AGPAGARGPAGPQGP. The segment covering 866 to 880 has biased composition (basic and acidic residues); the sequence is RGDKGETGEQGDRGI. At lysine 869 the chain carries 5-hydroxylysine. At lysine 881 the chain carries 5-hydroxylysine; alternate. A glycan (O-linked (Gal...) hydroxylysine; alternate) is linked at lysine 881. 4 positions are modified to 4-hydroxyproline: proline 896, proline 899, proline 917, and proline 932. Residues 899–932 are compositionally biased toward low complexity; the sequence is PGEQGPSGASGPAGPRGPPGSAGSPGKDGLNGLP. At proline 937 the chain carries 3-hydroxyproline. Proline 938 bears the 4-hydroxyproline mark. Positions 950 to 965 are enriched in pro residues; the sequence is VGPPGPPGPPGPPGPP. Residue proline 952 is modified to 3-hydroxyproline. Proline 953 carries the post-translational modification 4-hydroxyproline. A 3-hydroxyproline modification is found at proline 955. Proline 956 carries the post-translational modification 4-hydroxyproline. Proline 958 is modified (3-hydroxyproline). A 4-hydroxyproline mark is found at proline 959, proline 962, and proline 965.

This sequence belongs to the fibrillar collagen family. In terms of assembly, trimers of one alpha 2(I) and two alpha 1(I) chains. Post-translationally, contains mostly 4-hydroxyproline. Proline residues at the third position of the tripeptide repeating unit (G-X-Y) are hydroxylated in some or all of the chains. Contains 3-hydroxyproline at a few sites. This modification occurs on the first proline residue in the sequence motif Gly-Pro-Hyp, where Hyp is 4-hydroxyproline. In terms of processing, lysine residues at the third position of the tripeptide repeating unit (G-X-Y) are 5-hydroxylated in some or all of the chains. Post-translationally, O-glycosylated on hydroxylated lysine residues. The O-linked glycan consists of a Glc-Gal disaccharide. Expressed in bones.

It is found in the secreted. It localises to the extracellular space. The protein resides in the extracellular matrix. In terms of biological role, type I collagen is a member of group I collagen (fibrillar forming collagen). In Scelidotherium sp. (strain SLP-2019) (South American ground sloth), this protein is Collagen alpha-1(I) chain.